Reading from the N-terminus, the 562-residue chain is MTRTMVVTVRFCTFLINVDDEWDANPWLPEQVSLDPRPPLKHRPKLNFDMSAFSSRGMRLARTLQRRYTRRPLPTYQQPTPFTFRILPAEDREWCSISTMAIAENYEDVLKGKYPAKEHARKVAKWIIEKGGDKNGTIYLEAQKQKLNEDNDGEAPFRQRRYFFYLSGCELPDSYLTYEIPNDRLTLFIPPVEPEEVIWSGLPMSVDEAKAKYDIDDCKTTRDINAHLTSTSESAQSTIYAIPEQVSDNITFLSYKDKEFKQLKPAIEYCRVTKTDYEIALIRKANEISTAAHIAVMKAASKAKNECELEAVFLKSCVERNAKNQAYHSIVAAGENGATLHYVNNAAPISEQNLLLLDAGCEVDCYASDITRTFPIKGHFNEESLAIYKIVLDMQHQCINALKAGVLWDSIHELAHKIAIKGLLDLGILKGDADAIFKARASVAFFPHGLGHYLGMDTHDTGGNANYADKDVMFRYLRVRGTLPERSVITVEPGIYFCRFIIEPYLKDEEKKQFFDEKVLEKYWSVGGVRIEDNILITKEGIENLTPTPKEVDEITALVQSA.

Asp358, Asp369, Glu492, and Glu532 together coordinate Mn(2+).

The protein belongs to the peptidase M24B family. Mn(2+) is required as a cofactor.

The enzyme catalyses Release of any N-terminal amino acid, including proline, that is linked to proline, even from a dipeptide or tripeptide.. In terms of biological role, catalyzes the removal of a penultimate prolyl residue from the N-termini of peptides. The protein is Probable Xaa-Pro aminopeptidase PEPP (PEPP) of Leptosphaeria maculans (strain JN3 / isolate v23.1.3 / race Av1-4-5-6-7-8) (Blackleg fungus).